Here is a 572-residue protein sequence, read N- to C-terminus: Neuronal acetylcholine receptor subunit alpha-9-I (572 aa).

The signal sequence occupies residues 1–19; that stretch reads MKTVVLLTWISCWIDVCTS. At 20-232 the chain is on the extracellular side; that stretch reads AQGRYAQKLL…YTLHLKRRSL (213 aa). Asparagine 51 is a glycosylation site (N-linked (GlcNAc...) asparagine). A disulfide bridge connects residues cysteine 149 and cysteine 163. Asparagine 164 is a glycosylation site (N-linked (GlcNAc...) asparagine). The cysteines at positions 213 and 214 are disulfide-linked. The next 3 membrane-spanning stretches (helical) occupy residues 233-253, 263-283, and 297-317; these read FYIF…PLGF, VSLG…VAES, and YIAT…IMNI. Over 318–550 the chain is Cytoplasmic; sequence HFCGAEAKPV…WKKVAKVMDR (233 aa). Positions 405–458 are disordered; the sequence is GHLQNHHSTHQNHLDNCRYANGGHRDDHYSNRSNQNHHSNRSQTSKGEGGEEKR. The span at 435–447 shows a compositional bias: low complexity; it reads NRSNQNHHSNRSQ. A helical transmembrane segment spans residues 551 to 571; sequence FFMWIFFIMVFLMSILIIGKA.

Belongs to the ligand-gated ion channel (TC 1.A.9) family. Acetylcholine receptor (TC 1.A.9.1) subfamily. As to expression, expressed in the liver, olfactory mucosa, pituitary gland, hair cells of the saccule and spleen.

It is found in the postsynaptic cell membrane. The protein resides in the cell membrane. This Oncorhynchus mykiss (Rainbow trout) protein is Neuronal acetylcholine receptor subunit alpha-9-I (nachra9).